Consider the following 504-residue polypeptide: MTPSPLLLLLLPPLLLGAFPPAAAARGPPKMADKVVPRQVARLGRTVRLQCPVEGDPPPLTMWTKDGRTIHSGWSRFRVLPQGLKVKQVEREDAGVYVCKATNGFGSLSVNYTLVVLDDISPGKESLGPDSSSGGQEDPASQQWARPRFTQPSKMRRRVIARPVGSSVRLKCVASGHPRPDITWMKDDQALTRPEAAEPRKKKWTLSLKNLRPEDSGKYTCRVSNRAGAINATYKVDVIQRTRSKPVLTGTHPVNTTVDFGGTTSFQCKVRSDVKPVIQWLKRVEYGAEGRHNSTIDVGGQKFVVLPTGDVWSRPDGSYLNKLLITRARQDDAGMYICLGANTMGYSFRSAFLTVLPDPKPPGPPVASSSSATSLPWPVVIGIPAGAVFILGTLLLWLCQAQKKPCTPAPAPPLPGHRPPGTARDRSGDKDLPSLAALSAGPGVGLCEEHGSPAAPQHLLGPGPVAGPKLYPKLYTDIHTHTHTHSHTHSHVEGKVHQHIHYQC.

A signal peptide spans 1-24 (MTPSPLLLLLLPPLLLGAFPPAAA). Residues 25–378 (ARGPPKMADK…SSSATSLPWP (354 aa)) are Extracellular-facing. In terms of domain architecture, Ig-like C2-type 1 spans 29–115 (PKMADKVVPR…GSLSVNYTLV (87 aa)). Cysteines 51 and 99 form a disulfide. An N-linked (GlcNAc...) asparagine glycan is attached at Asn-111. The segment at 123-155 (GKESLGPDSSSGGQEDPASQQWARPRFTQPSKM) is disordered. The span at 129 to 144 (PDSSSGGQEDPASQQW) shows a compositional bias: polar residues. 2 Ig-like C2-type domains span residues 147 to 237 (PRFT…YKVD) and 246 to 354 (PVLT…AFLT). Cys-172 and Cys-221 are oxidised to a cystine. N-linked (GlcNAc...) asparagine glycans are attached at residues Asn-231, Asn-255, and Asn-293. A disulfide bond links Cys-268 and Cys-338. Residues 379–399 (VVIGIPAGAVFILGTLLLWLC) form a helical membrane-spanning segment. Residues 400-504 (QAQKKPCTPA…KVHQHIHYQC (105 aa)) are Cytoplasmic-facing. A compositionally biased stretch (pro residues) spans 407–418 (TPAPAPPLPGHR). The disordered stretch occupies residues 407–435 (TPAPAPPLPGHRPPGTARDRSGDKDLPSL). A compositionally biased stretch (basic and acidic residues) spans 423–432 (ARDRSGDKDL).

As to quaternary structure, interacts with FGF2 with a low affinity. In terms of tissue distribution, expressed preferentially in cartilaginous tissues and pancreas. Highly expressed in the liver, kidney, heart, brain and skeletal muscle. Weakly expressed in the lung, small intestine and spleen.

Its subcellular location is the membrane. Has a negative effect on cell proliferation. In Homo sapiens (Human), this protein is Fibroblast growth factor receptor-like 1 (FGFRL1).